The sequence spans 946 residues: MRLFIGRRSRSIVISSNNYCLSFQRLRSIPGASSQQRQLSKTPSVTIKSYPDTDLSSDSNYLEVKSCIFNGLLGLVCLNGDIYVAVISGVQNVGFPRWKLIDHQVRPSESIYKVLDVDFYSLENDVFDYLLCERSEQNYDKLIHEHPCGPLKKLFSDGTFYYSRDFDISNIVKNHGLSHNLEYTVDNQDLSFIWNANLASEVINWRSKISNEEKQLFANAGFLTFVIRGYCKTALIEDGPNTASITIISRISTESKQDTLELEGISEDGRVSLFVETEIVVTTEKFIFSYTQVNGSIPLFWESVESQLLYGKKIKVTKDSIEAQGAFDRHFDNLTSKYGVVSIVNIIKPKSESQEKLALTYKDCAESKGIKITNIEYSSSVLTKSPHKLLYLLKQDIYEFGAFAYDISRGIYFAKQTGVLRISAFDSIEKPNTVERLVSKEVLELTTNEIDVFELTSPFLDAHDKLWSENYYWLDRTYTKHTKNSGKYTKVYSKLFGSRVRLYDPLHIYISQYLKQLRSKYTFEKDISIFAGTFNISGKIPKDDIKDWIFPKSMSKEDEMADLYVIGLEEVVELTPGHMLATDPYVRQFWEKKILTLLNGPGRKKKYIRLWSTQLGGILLLLFMNETEYSKVKHIEGDVKKTGFGGMASNKGAVAVSFKYSATRFCVLVSHLAAGLENVEQRHNDYKTIAKSIRFSKGLRIKDHDAIIWMGDFNYRILMSNEDVRRKIVSKEYASLFEKDQLNQQMIAGESFPYFHEMAIDFPPTYKFDPGTKNYDTSEKMRIPAWTDRILSRGEVLEQLEYKCCEDILFSDHRPVYAIFRARVTVVDEQKKTTLGTQIYEKIMERLEGLDDDEKIAVLSDDAFVIESFEGSDSIAGPTHSPTPIPEPKRGRKLPPPSSDLKKWWIGSGKQVKVVLDVDPAVYMINPKRDPNPFVENEDEPLFIER.

Positions 151-480 (LKKLFSDGTF…YYWLDRTYTK (330 aa)) constitute an SAC domain. 2 disordered regions span residues 872–902 (SDSI…SDLK) and 927–946 (PKRD…FIER). Acidic residues predominate over residues 936 to 946 (ENEDEPLFIER).

This sequence belongs to the synaptojanin family. The protein in the central section; belongs to the inositol 1,4,5-trisphosphate 5-phosphatase family. As to quaternary structure, interacts with IRS4 and TAX4.

It localises to the cytoplasm. Its subcellular location is the cytoskeleton. The protein resides in the actin patch. The enzyme catalyses a 1,2-diacyl-sn-glycero-3-phospho-(1D-myo-inositol-4,5-bisphosphate) + H2O = a 1,2-diacyl-sn-glycero-3-phospho-(1D-myo-inositol 4-phosphate) + phosphate. Its activity is regulated as follows. IRS4 and TAX4 are both positive regulator of INP51 activity and phosphatidylinositol 4,5-bisphosphate turnover. Its function is as follows. Controls the cellular levels and subcellular distribution of phosphatidylinositol 4,5-bisphosphate (PtdIns(4,5)P2). Does not utilize phosphatidylinositol 3,5-bisphosphate (PtdIns(3,5)P2), nor phosphatidylinositol 3-phosphate (PtdIns(3)P) and phosphatidylinositol 4-phosphate (PtdIns(4)P). Plays an essential role in a TGN (trans Golgi network)-to-early endosome pathway. Involved in endocytosis and acts as a negative regulator of the Slm pathway which modulates polarized actin assembly and growth. This is Phosphatidylinositol 4,5-bisphosphate 5-phosphatase INP51 (INP51) from Saccharomyces cerevisiae (strain ATCC 204508 / S288c) (Baker's yeast).